A 546-amino-acid chain; its full sequence is Chaperonin GroEL (546 aa).

Residues 29 to 32 (TLGP), 86 to 90 (DGTTT), G413, 476 to 478 (NAA), and D492 each bind ATP. A disordered region spans residues 521–546 (RPDESGNDAGAGAQGMDPSMMGGGMM).

Belongs to the chaperonin (HSP60) family. In terms of assembly, forms a cylinder of 14 subunits composed of two heptameric rings stacked back-to-back. Interacts with the co-chaperonin GroES.

It is found in the cytoplasm. The catalysed reaction is ATP + H2O + a folded polypeptide = ADP + phosphate + an unfolded polypeptide.. Together with its co-chaperonin GroES, plays an essential role in assisting protein folding. The GroEL-GroES system forms a nano-cage that allows encapsulation of the non-native substrate proteins and provides a physical environment optimized to promote and accelerate protein folding. The polypeptide is Chaperonin GroEL (Tetragenococcus halophilus (Pediococcus halophilus)).